The sequence spans 444 residues: Trigger factor (444 aa).

The PPIase FKBP-type domain maps to 160–245 (DMQVTFDFEG…VKQVEKPKLP (86 aa)).

It belongs to the FKBP-type PPIase family. Tig subfamily.

It localises to the cytoplasm. It catalyses the reaction [protein]-peptidylproline (omega=180) = [protein]-peptidylproline (omega=0). Involved in protein export. Acts as a chaperone by maintaining the newly synthesized protein in an open conformation. Functions as a peptidyl-prolyl cis-trans isomerase. In Acinetobacter baumannii (strain SDF), this protein is Trigger factor.